The sequence spans 757 residues: Polyribonucleotide nucleotidyltransferase (757 aa).

Mg(2+) is bound by residues D482 and D488. Residues 549–608 (PRMLSFYIDKDKISAAIGSKGKNIRSVCERSNAKIEIGDDGKVSVFATSGTEAEIAKSMM) form the KH domain. In terms of domain architecture, S1 motif spans 618 to 686 (GSIVDVKVVR…KGGCPKLSRR (69 aa)). Residues 703-714 (EERKDGPNDRDN) show a composition bias toward basic and acidic residues. The interval 703 to 757 (EERKDGPNDRDNYYNNSFSRKPGGSHHKRPPRPRSGFSNRNRPKFGNNDSSSGFY) is disordered. The segment covering 725 to 734 (GGSHHKRPPR) has biased composition (basic residues).

The protein belongs to the polyribonucleotide nucleotidyltransferase family. Requires Mg(2+) as cofactor.

Its subcellular location is the cytoplasm. It carries out the reaction RNA(n+1) + phosphate = RNA(n) + a ribonucleoside 5'-diphosphate. Functionally, involved in mRNA degradation. Catalyzes the phosphorolysis of single-stranded polyribonucleotides processively in the 3'- to 5'-direction. This Wolbachia sp. subsp. Drosophila simulans (strain wRi) protein is Polyribonucleotide nucleotidyltransferase.